The following is a 438-amino-acid chain: Arginine deiminase-like protein (438 aa).

This sequence belongs to the arginine deiminase family.

The protein is Arginine deiminase-like protein of Mycoplasma pneumoniae (strain ATCC 29342 / M129 / Subtype 1) (Mycoplasmoides pneumoniae).